Here is a 373-residue protein sequence, read N- to C-terminus: Putative citrate synthase 2 (373 aa).

Catalysis depends on residues His250 and Glu303.

It belongs to the citrate synthase family.

The catalysed reaction is oxaloacetate + acetyl-CoA + H2O = citrate + CoA + H(+). The protein operates within carbohydrate metabolism; tricarboxylic acid cycle; isocitrate from oxaloacetate: step 1/2. The polypeptide is Putative citrate synthase 2 (citA) (Mycobacterium bovis (strain ATCC BAA-935 / AF2122/97)).